A 122-amino-acid chain; its full sequence is Flagellar protein FliT (122 aa).

Residues 1–50 (MTSTVEFINRWQRIALLSQSLLELAQRGEWELLLQQEVSYLQSIETVMEK) form a required for homodimerization region. The segment at 60 to 98 (IQDMVAGYIKQTLDNEQRLKGLLQQRLDELSGLIGQSTR) is fliD binding.

It belongs to the FliT family. As to quaternary structure, homodimer. Interacts with FliD and FlhC.

The protein localises to the cytoplasm. It is found in the cytosol. Functionally, dual-function protein that regulates the transcription of class 2 flagellar operons and that also acts as an export chaperone for the filament-capping protein FliD. As a transcriptional regulator, acts as an anti-FlhDC factor; it directly binds FlhC, thus inhibiting the binding of the FlhC/FlhD complex to class 2 promoters, resulting in decreased expression of class 2 flagellar operons. As a chaperone, effects FliD transition to the membrane by preventing its premature polymerization, and by directing it to the export apparatus. This is Flagellar protein FliT from Salmonella arizonae (strain ATCC BAA-731 / CDC346-86 / RSK2980).